The primary structure comprises 446 residues: tRNA modification GTPase MnmE (446 aa).

(6S)-5-formyl-5,6,7,8-tetrahydrofolate contacts are provided by R21, E77, and K116. Residues 212-370 (GFRIALIGAP…LRAALASHVA (159 aa)) enclose the TrmE-type G domain. N222 provides a ligand contact to K(+). Residues 222-227 (NAGKST), 241-247 (TDVAGTT), and 266-269 (DTAG) contribute to the GTP site. Mg(2+) is bound at residue S226. The K(+) site is built by T241, V243, and T246. T247 is a Mg(2+) binding site. K446 contacts (6S)-5-formyl-5,6,7,8-tetrahydrofolate.

The protein belongs to the TRAFAC class TrmE-Era-EngA-EngB-Septin-like GTPase superfamily. TrmE GTPase family. In terms of assembly, homodimer. Heterotetramer of two MnmE and two MnmG subunits. Requires K(+) as cofactor.

It localises to the cytoplasm. Exhibits a very high intrinsic GTPase hydrolysis rate. Involved in the addition of a carboxymethylaminomethyl (cmnm) group at the wobble position (U34) of certain tRNAs, forming tRNA-cmnm(5)s(2)U34. In Caulobacter vibrioides (strain ATCC 19089 / CIP 103742 / CB 15) (Caulobacter crescentus), this protein is tRNA modification GTPase MnmE.